A 220-amino-acid polypeptide reads, in one-letter code: MSKSMYHYIAEAWKEKSRELEALIRQRLIEWRREPSVVRLEKPTRLDKARALGYKAKVGFIIVRVRVRKGGQRKPRPDSGRRPKRMGVYGYAPAKSLRLIAEERAARKFPGLEVLNSYYVAEDGRYKWYEVILVDPHHPSICNDPDVNWICEPQNRGRVFRGLTSAGKKMRGLRKSRGLRGTVYYKWKRKLKERELKKRHEASRGARDPWQIAEKLKEEK.

The span at 197-207 (KKRHEASRGAR) shows a compositional bias: basic and acidic residues. The interval 197-220 (KKRHEASRGARDPWQIAEKLKEEK) is disordered.

The protein belongs to the eukaryotic ribosomal protein eL15 family.

The chain is Large ribosomal subunit protein eL15 from Desulfurococcus amylolyticus (strain DSM 18924 / JCM 16383 / VKM B-2413 / 1221n) (Desulfurococcus kamchatkensis).